We begin with the raw amino-acid sequence, 469 residues long: tRNA modification GTPase MnmE (469 aa).

(6S)-5-formyl-5,6,7,8-tetrahydrofolate is bound by residues arginine 38, glutamate 95, and arginine 134. One can recognise a TrmE-type G domain in the interval 230 to 392 (GIRVALVGPP…LRRGLAALVD (163 aa)). GTP is bound by residues 240-245 (NAGKSS), 259-265 (SAQAGTT), and 284-287 (DTAG). Residues serine 244 and threonine 265 each contribute to the Mg(2+) site. Lysine 468 is a binding site for (6S)-5-formyl-5,6,7,8-tetrahydrofolate.

Belongs to the TRAFAC class TrmE-Era-EngA-EngB-Septin-like GTPase superfamily. TrmE GTPase family. In terms of assembly, homodimer. Heterotetramer of two MnmE and two MnmG subunits. It depends on K(+) as a cofactor.

Its subcellular location is the cytoplasm. Exhibits a very high intrinsic GTPase hydrolysis rate. Involved in the addition of a carboxymethylaminomethyl (cmnm) group at the wobble position (U34) of certain tRNAs, forming tRNA-cmnm(5)s(2)U34. The chain is tRNA modification GTPase MnmE from Halorhodospira halophila (strain DSM 244 / SL1) (Ectothiorhodospira halophila (strain DSM 244 / SL1)).